The following is an 851-amino-acid chain: Putative serine/threonine-protein kinase 019R (851 aa).

5 disordered regions span residues Met1–Lys24, Pro61–Pro91, Gly104–Gly160, Gly190–Ser216, and Ser340–Arg400. Residues Ala125–Glu141 show a composition bias toward low complexity. Residues Ser196–Ser216 show a composition bias toward basic residues. The span at Ser340–Ser366 shows a compositional bias: low complexity. The Protein kinase domain maps to Ala456–Met851. ATP contacts are provided by residues Ile462–Val470 and Lys485. Catalysis depends on Asp608, which acts as the Proton acceptor.

The protein belongs to the protein kinase superfamily. Ser/Thr protein kinase family.

The enzyme catalyses L-seryl-[protein] + ATP = O-phospho-L-seryl-[protein] + ADP + H(+). It carries out the reaction L-threonyl-[protein] + ATP = O-phospho-L-threonyl-[protein] + ADP + H(+). The polypeptide is Putative serine/threonine-protein kinase 019R (Dryophytes versicolor (chameleon treefrog)).